The primary structure comprises 328 residues: Carbonic anhydrase-related protein 10 (328 aa).

Positions 31–301 constitute an Alpha-carbonic anhydrase domain; the sequence is GWWAYKEVVQ…LNNRCIRTNI (271 aa).

This sequence belongs to the alpha-carbonic anhydrase family.

Does not have a catalytic activity. The sequence is that of Carbonic anhydrase-related protein 10 (CA10) from Bos taurus (Bovine).